The sequence spans 122 residues: Large ribosomal subunit protein uL14 (122 aa).

It belongs to the universal ribosomal protein uL14 family. As to quaternary structure, part of the 50S ribosomal subunit. Forms a cluster with proteins L3 and L19. In the 70S ribosome, L14 and L19 interact and together make contacts with the 16S rRNA in bridges B5 and B8.

In terms of biological role, binds to 23S rRNA. Forms part of two intersubunit bridges in the 70S ribosome. This chain is Large ribosomal subunit protein uL14, found in Ruminiclostridium cellulolyticum (strain ATCC 35319 / DSM 5812 / JCM 6584 / H10) (Clostridium cellulolyticum).